The following is a 141-amino-acid chain: ATP synthase epsilon chain (141 aa).

It belongs to the ATPase epsilon chain family. As to quaternary structure, F-type ATPases have 2 components, CF(1) - the catalytic core - and CF(0) - the membrane proton channel. CF(1) has five subunits: alpha(3), beta(3), gamma(1), delta(1), epsilon(1). CF(0) has three main subunits: a, b and c.

It is found in the cell membrane. Functionally, produces ATP from ADP in the presence of a proton gradient across the membrane. This Lactococcus lactis subsp. lactis (strain IL1403) (Streptococcus lactis) protein is ATP synthase epsilon chain.